We begin with the raw amino-acid sequence, 174 residues long: MESKKIAITELLNPSNQENLKEKLQEINKQLISLCSSLPKRNWVPAPSSDILRSLSRTKLDSQEIRLIKTTYRLSTLLSKLQEKDIVFNVVTKDHLLKNGTPYNPYPQPYRGHRFTKENVHTLEAWYSNHIDNPYLDPKSLQSLAQKTNLSKIQIKNWVSNRRRKQKHPPFLLI.

The segment at residues 108 to 170 (QPYRGHRFTK…NRRRKQKHPP (63 aa)) is a DNA-binding region (homeobox; TALE-type).

Belongs to the TALE/M-ATYP homeobox family. As to quaternary structure, forms a heterodimer with A1.

It localises to the nucleus. Mating type proteins are sequence specific DNA-binding proteins that act as master switches in yeast differentiation by controlling gene expression in a cell type-specific fashion. Transcriptional corepressor that acts in conjunction with A1 to repress transcription of haploid-specific genes and of MATALPHA1. In Nakaseomyces delphensis (Yeast), this protein is Mating-type protein ALPHA2 (MATALPHA2).